Here is a 78-residue protein sequence, read N- to C-terminus: Acyl carrier protein (78 aa).

Positions 2–77 (STIEERVKKI…AAIDYVKAHQ (76 aa)) constitute a Carrier domain. An O-(pantetheine 4'-phosphoryl)serine modification is found at S37.

The protein belongs to the acyl carrier protein (ACP) family. Post-translationally, 4'-phosphopantetheine is transferred from CoA to a specific serine of apo-ACP by AcpS. This modification is essential for activity because fatty acids are bound in thioester linkage to the sulfhydryl of the prosthetic group.

The protein localises to the cytoplasm. Its pathway is lipid metabolism; fatty acid biosynthesis. Functionally, carrier of the growing fatty acid chain in fatty acid biosynthesis. In Pseudomonas putida (strain ATCC 47054 / DSM 6125 / CFBP 8728 / NCIMB 11950 / KT2440), this protein is Acyl carrier protein.